The following is a 292-amino-acid chain: tRNA (adenine(9)-N1)-methyltransferase (292 aa).

Positions 72-253 (TFRKGGKKVS…ISLQSKSDKI (182 aa)) constitute an SAM-dependent MTase TRM10-type domain.

Belongs to the class IV-like SAM-binding methyltransferase superfamily. TRM10 family.

The protein localises to the cytoplasm. The catalysed reaction is adenosine(9) in tRNA + S-adenosyl-L-methionine = N(1)-methyladenosine(9) in tRNA + S-adenosyl-L-homocysteine + H(+). Functionally, catalyzes the S-adenosyl-L-methionine-dependent formation of N(1)-methyladenine at position 9 (m1A9) in tRNA. The protein is tRNA (adenine(9)-N1)-methyltransferase of Sulfolobus acidocaldarius (strain ATCC 33909 / DSM 639 / JCM 8929 / NBRC 15157 / NCIMB 11770).